Here is a 1488-residue protein sequence, read N- to C-terminus: Neuropathy target esterase sws (1488 aa).

Residues 1–34 (MDVLELLRASVNGCYNTLFSDAWSQYVSKQIATT) are Lumenal-facing. A helical membrane pass occupies residues 35–55 (TYWYGALLAIGALFIAWFLYF). The Cytoplasmic portion of the chain corresponds to 56-1488 (KRLASLRLRD…ENVTEADTKN (1433 aa)). An a nucleoside 3',5'-cyclic phosphate-binding site is contributed by 175–302 (IFGHFEKPIF…IRVIQVIMIR (128 aa)). Disordered stretches follow at residues 339-379 (PGPV…DPNP) and 402-440 (QQQQSSGVSVGGTHRSSGACTPTGSGGESPDGTGNATIT). Low complexity-rich tracts occupy residues 344-356 (SQASQASRAMASR) and 402-413 (QQQQSSGVSVGG). Over residues 415 to 424 (HRSSGACTPT) the composition is skewed to polar residues. Residues 458-587 (ELGL…VVRR) and 576-703 (IVLD…LSHR) contribute to the a nucleoside 3',5'-cyclic phosphate site. Residues 929–1095 (LVLGGGGARG…VNNLPGHLWR (167 aa)) enclose the PNPLA domain. The GXGXXG signature appears at 933 to 938 (GGGARG). Residues 960-964 (GVSIG) carry the GXSXG motif. Residue serine 962 is the Nucleophile of the active site. Aspartate 1082 (proton acceptor) is an active-site residue. The DGA/G signature appears at 1082–1084 (DGG). Serine 1176 carries the post-translational modification Phosphoserine. Disordered regions lie at residues 1348 to 1376 (RKVDKSTQSTPPTPNKKHPSTPTSSQGNL) and 1398 to 1488 (EHKR…DTKN). Over residues 1399 to 1410 (HKRRQKSKHKRD) the composition is skewed to basic residues. Residues 1440–1452 (IDAKLDQLRKLQQ) show a composition bias toward basic and acidic residues. Positions 1456–1470 (QGNESEQEQEQEQEQ) are enriched in acidic residues.

This sequence belongs to the NTE family. As to quaternary structure, interacts with Pka-C3; interaction inhibits the catalytic function of Pka-C3 and the esterase activity of sws.

The protein localises to the endoplasmic reticulum membrane. It carries out the reaction a 1-acyl-sn-glycero-3-phosphocholine + H2O = sn-glycerol 3-phosphocholine + a fatty acid + H(+). In terms of biological role, phospholipase B that deacylates intracellular phosphatidylcholine (PtdCho), generating glycerophosphocholine (GroPtdCho). This deacylation occurs at both sn-2 and sn-1 positions of PtdCho. Its specific chemical modification by certain organophosphorus (OP) compounds leads to distal axonopathy. Plays a role in the signaling mechanism between neurons and glia that regulates glia wrapping during development of the adult brain. Essential for membrane lipid homeostasis and cell survival in both neurons and glia of the adult brain. The sequence is that of Neuropathy target esterase sws from Drosophila mojavensis (Fruit fly).